We begin with the raw amino-acid sequence, 540 residues long: Probable G-protein coupled receptor 75 (540 aa).

The Extracellular segment spans residues 1–46; sequence MNTSAPLQNVPNATLLNMPPLHGGNSTSLQEGLRDFIHTATLVTCT. N2 and N25 each carry an N-linked (GlcNAc...) asparagine glycan. The helical transmembrane segment at 47–67 threads the bilayer; that stretch reads FLLAIIFCLGSYGNFIVFLSF. Residues 68–86 lie on the Cytoplasmic side of the membrane; the sequence is FDPSFRKFRTNFDFMILNL. Residues 87–107 form a helical membrane-spanning segment; that stretch reads SFCDLFICGVTAPMFTFVLFF. Over 108 to 120 the chain is Extracellular; that stretch reads SSASSIPDSFCFT. Residues 121–141 form a helical membrane-spanning segment; it reads FHLTSSGFVIMSLKMVAVIAL. The Cytoplasmic segment spans residues 142 to 160; that stretch reads HRLRMVMGKQPNCTASFSC. Residues 161–181 traverse the membrane as a helical segment; sequence ILLLTLLLWATSFTLATLATL. Residues 182–205 are Extracellular-facing; that stretch reads RTNKSHLCLPMSSLMDGEGKAILS. N184 carries N-linked (GlcNAc...) asparagine glycosylation. A helical transmembrane segment spans residues 206-226; that stretch reads LYVVDFTFCVAVVSVSYIMIA. Over 227-318 the chain is Cytoplasmic; the sequence is QTLRKNAQVK…INFSTAKDSK (92 aa). Residues 319–339 traverse the membrane as a helical segment; sequence AVVTCVVIVLSVLVCCLPLGI. The Extracellular segment spans residues 340–350; it reads SLVQMVLSDNG. Residues 351-371 form a helical membrane-spanning segment; the sequence is SFILYQFELFGFTLIFFKSGL. Residues 372-540 lie on the Cytoplasmic side of the membrane; it reads NPFIYSRNSA…SAKQIPIPSV (169 aa). Residues 443–475 form a disordered region; sequence DQACGPSHSKESAASPKVSAGHQPCGQSSSTPI.

This sequence belongs to the G-protein coupled receptor 1 family. As to expression, highly expressed in brain and heart. Also detected in skeletal muscle, liver and kidney. Also expressed by islet cells (at protein level).

The protein resides in the cell membrane. Its function is as follows. G protein-coupled receptor that is activated by the chemokine CCL5/RANTES. Probably coupled to heterotrimeric Gq proteins, it stimulates inositol trisphosphate production and calcium mobilization upon activation. Together with CCL5/RANTES, may play a role in neuron survival through activation of a downstream signaling pathway involving the PI3, Akt and MAP kinases. CCL5/RANTES may also regulate insulin secretion by pancreatic islet cells through activation of this receptor. The protein is Probable G-protein coupled receptor 75 (Gpr75) of Mus musculus (Mouse).